Here is a 555-residue protein sequence, read N- to C-terminus: MRSDQIKKGLKQAPARAMLRAVGVGDEDFGRPFVGVVNTFTDGMPCNFHLRELAQHLKAGLREAGLFPFEFGAPAISDGISMGTPGMRASLVSREVIADSVELIAQGYLYDGMVGLSACDKTIPGTAMGVIRSGVPGMVLYGGTIAPGEWQGRKLTIVEVFEAVGQRAAGKISEEELLEIERRAIPGPGACGGQYTANTMAMALEALGLSPVGYNAIPAVHPEKERATKEAGKILAWAIAHDWKPKDFLTRKSFLNAVAAVAATGGSTNAVLHLLALAKEAGVELSLDDFDQISRKTPVIADLRPWGTYTAWELYEAGGTALVFKRLLEAGLLFGEEKTLTGRTLAEEVERAYREQEGQKVVFPVEKALKPHGGLVVLKGNLAPQGAVLKLAGTERTSFEGPARVFDSEEAAMEKVLKGEIRPGDVVVIRYVGPKGAPGMPEMLSVTSAIVGEGLGPEVALLTDGRFSGGTRGLMIGHIAPEAFVGGPIALLEEGDRIRIDVEGRRLEVLLPEEELERRRARWRPRPPAFTHGLFARYAALVRQADEGAVLEDPL.

[2Fe-2S] cluster is bound at residue cysteine 46. Mg(2+) is bound at residue aspartate 78. Residue cysteine 119 participates in [2Fe-2S] cluster binding. The Mg(2+) site is built by aspartate 120 and lysine 121. Position 121 is an N6-carboxylysine (lysine 121). Residue cysteine 191 coordinates [2Fe-2S] cluster. Glutamate 442 contributes to the Mg(2+) binding site. Serine 468 acts as the Proton acceptor in catalysis.

Belongs to the IlvD/Edd family. Homodimer. It depends on [2Fe-2S] cluster as a cofactor. Mg(2+) serves as cofactor.

The enzyme catalyses (2R)-2,3-dihydroxy-3-methylbutanoate = 3-methyl-2-oxobutanoate + H2O. It catalyses the reaction (2R,3R)-2,3-dihydroxy-3-methylpentanoate = (S)-3-methyl-2-oxopentanoate + H2O. Its pathway is amino-acid biosynthesis; L-isoleucine biosynthesis; L-isoleucine from 2-oxobutanoate: step 3/4. It functions in the pathway amino-acid biosynthesis; L-valine biosynthesis; L-valine from pyruvate: step 3/4. Functionally, functions in the biosynthesis of branched-chain amino acids. Catalyzes the dehydration of (2R,3R)-2,3-dihydroxy-3-methylpentanoate (2,3-dihydroxy-3-methylvalerate) into 2-oxo-3-methylpentanoate (2-oxo-3-methylvalerate) and of (2R)-2,3-dihydroxy-3-methylbutanoate (2,3-dihydroxyisovalerate) into 2-oxo-3-methylbutanoate (2-oxoisovalerate), the penultimate precursor to L-isoleucine and L-valine, respectively. This is Dihydroxy-acid dehydratase from Thermus thermophilus (strain ATCC BAA-163 / DSM 7039 / HB27).